Here is a 416-residue protein sequence, read N- to C-terminus: Multifunctional CCA protein (416 aa).

ATP-binding residues include Gly-8 and Arg-11. Residues Gly-8 and Arg-11 each contribute to the CTP site. Mg(2+) contacts are provided by Asp-21 and Asp-23. The ATP site is built by Arg-91, Arg-138, and Arg-141. Positions 91, 138, and 141 each coordinate CTP. In terms of domain architecture, HD spans Thr-229–Phe-331.

It belongs to the tRNA nucleotidyltransferase/poly(A) polymerase family. Bacterial CCA-adding enzyme type 1 subfamily. Monomer. Can also form homodimers and oligomers. The cofactor is Mg(2+). Ni(2+) is required as a cofactor.

It carries out the reaction a tRNA precursor + 2 CTP + ATP = a tRNA with a 3' CCA end + 3 diphosphate. The enzyme catalyses a tRNA with a 3' CCA end + 2 CTP + ATP = a tRNA with a 3' CCACCA end + 3 diphosphate. In terms of biological role, catalyzes the addition and repair of the essential 3'-terminal CCA sequence in tRNAs without using a nucleic acid template. Adds these three nucleotides in the order of C, C, and A to the tRNA nucleotide-73, using CTP and ATP as substrates and producing inorganic pyrophosphate. tRNA 3'-terminal CCA addition is required both for tRNA processing and repair. Also involved in tRNA surveillance by mediating tandem CCA addition to generate a CCACCA at the 3' terminus of unstable tRNAs. While stable tRNAs receive only 3'-terminal CCA, unstable tRNAs are marked with CCACCA and rapidly degraded. The chain is Multifunctional CCA protein from Xylella fastidiosa (strain M12).